Reading from the N-terminus, the 428-residue chain is Bifunctional protein GlmU (428 aa).

The pyrophosphorylase stretch occupies residues 1–221 (MDIVILAAGC…ERKAMGINTR (221 aa)). UDP-N-acetyl-alpha-D-glucosamine contacts are provided by residues 6–9 (LAAG), Lys20, Gln74, 79–80 (GT), 103–105 (YGD), Gly140, and Asn219. Asp105 provides a ligand contact to Mg(2+). Residue Asn219 coordinates Mg(2+). Residues 222–242 (ADLAIAESYFQCMKRASFLQS) form a linker region. An N-acetyltransferase region spans residues 243–428 (GVTLTSPDQV…TTKPEYKTRR (186 aa)). Positions 308 and 326 each coordinate UDP-N-acetyl-alpha-D-glucosamine. Residue His338 is the Proton acceptor of the active site. UDP-N-acetyl-alpha-D-glucosamine contacts are provided by Tyr341 and Asn352. Residues Ala355, 361–362 (NY), Ala398, and Arg415 each bind acetyl-CoA.

The protein in the N-terminal section; belongs to the N-acetylglucosamine-1-phosphate uridyltransferase family. In the C-terminal section; belongs to the transferase hexapeptide repeat family. As to quaternary structure, homotrimer. Mg(2+) serves as cofactor.

Its subcellular location is the cytoplasm. It carries out the reaction alpha-D-glucosamine 1-phosphate + acetyl-CoA = N-acetyl-alpha-D-glucosamine 1-phosphate + CoA + H(+). It catalyses the reaction N-acetyl-alpha-D-glucosamine 1-phosphate + UTP + H(+) = UDP-N-acetyl-alpha-D-glucosamine + diphosphate. The protein operates within nucleotide-sugar biosynthesis; UDP-N-acetyl-alpha-D-glucosamine biosynthesis; N-acetyl-alpha-D-glucosamine 1-phosphate from alpha-D-glucosamine 6-phosphate (route II): step 2/2. Its pathway is nucleotide-sugar biosynthesis; UDP-N-acetyl-alpha-D-glucosamine biosynthesis; UDP-N-acetyl-alpha-D-glucosamine from N-acetyl-alpha-D-glucosamine 1-phosphate: step 1/1. It participates in bacterial outer membrane biogenesis; LPS lipid A biosynthesis. Functionally, catalyzes the last two sequential reactions in the de novo biosynthetic pathway for UDP-N-acetylglucosamine (UDP-GlcNAc). The C-terminal domain catalyzes the transfer of acetyl group from acetyl coenzyme A to glucosamine-1-phosphate (GlcN-1-P) to produce N-acetylglucosamine-1-phosphate (GlcNAc-1-P), which is converted into UDP-GlcNAc by the transfer of uridine 5-monophosphate (from uridine 5-triphosphate), a reaction catalyzed by the N-terminal domain. The protein is Bifunctional protein GlmU of Anaplasma marginale (strain Florida).